The primary structure comprises 66 residues: Large ribosomal subunit protein bL31 (66 aa).

Cysteine 16, cysteine 18, cysteine 36, and cysteine 39 together coordinate Zn(2+).

The protein belongs to the bacterial ribosomal protein bL31 family. Type A subfamily. In terms of assembly, part of the 50S ribosomal subunit. Zn(2+) serves as cofactor.

In terms of biological role, binds the 23S rRNA. The chain is Large ribosomal subunit protein bL31 from Sulfurimonas denitrificans (strain ATCC 33889 / DSM 1251) (Thiomicrospira denitrificans (strain ATCC 33889 / DSM 1251)).